We begin with the raw amino-acid sequence, 315 residues long: Olfactory receptor 4K3 (315 aa).

Residues 1 to 25 (MAWSNQSAVTEFILRGLSSSLELQI) are Extracellular-facing. Asparagine 5 carries N-linked (GlcNAc...) asparagine glycosylation. Residues 26 to 49 (FYFLFFSIVYAATVLGNLLIVVTI) traverse the membrane as a helical segment. Residues 50 to 57 (ASEPHLHS) lie on the Cytoplasmic side of the membrane. Residues 58 to 79 (PMYFLLGNLSFIDMSLASFATP) form a helical membrane-spanning segment. Residues 80–100 (KMIADFLREHKAISFEGCMTQ) are Extracellular-facing. A disulfide bond links cysteine 97 and cysteine 189. The helical transmembrane segment at 101 to 120 (MFFLHLLGGAEIVLLISMSF) threads the bilayer. The Cytoplasmic segment spans residues 121 to 139 (DRYVAICKPLHYLTIMSRR). The chain crosses the membrane as a helical span at residues 140-158 (MCVGLVILSWIVGIFHALS). The Extracellular portion of the chain corresponds to 159 to 195 (QLAFTVNLPFCGPNEVDSFFCDLPLVIKLACVDTYIL). Residues 196-219 (GVFMISTSGMIALVCFILLVISYT) form a helical membrane-spanning segment. The Cytoplasmic portion of the chain corresponds to 220-235 (IILVTVRQRSSGGSSK). The helical transmembrane segment at 236–258 (ALSTCSAHFTVVTLFFGPCTFIY) threads the bilayer. At 259–269 (VWPFTNFPIDK) the chain is on the extracellular side. The chain crosses the membrane as a helical span at residues 270 to 289 (VLSVFYTIYTPLLNPVIYTV). The Cytoplasmic portion of the chain corresponds to 290–315 (RNKDVKYSMRKLSSHIFKSRKTDHTP).

Belongs to the G-protein coupled receptor 1 family.

The protein resides in the cell membrane. In terms of biological role, odorant receptor. In Homo sapiens (Human), this protein is Olfactory receptor 4K3 (OR4K3).